The chain runs to 192 residues: Probable nicotinate-nucleotide adenylyltransferase (192 aa).

It belongs to the NadD family.

The enzyme catalyses nicotinate beta-D-ribonucleotide + ATP + H(+) = deamido-NAD(+) + diphosphate. The protein operates within cofactor biosynthesis; NAD(+) biosynthesis; deamido-NAD(+) from nicotinate D-ribonucleotide: step 1/1. Its function is as follows. Catalyzes the reversible adenylation of nicotinate mononucleotide (NaMN) to nicotinic acid adenine dinucleotide (NaAD). This Bradyrhizobium sp. (strain ORS 278) protein is Probable nicotinate-nucleotide adenylyltransferase.